The chain runs to 337 residues: Ribosomal RNA small subunit methyltransferase H (337 aa).

Residues 36-38, aspartate 56, phenylalanine 82, aspartate 100, and glutamine 107 each bind S-adenosyl-L-methionine; that span reads GGH. The interval 317 to 337 is disordered; it reads RRSGRIPNPQSPIPASQGDAR.

This sequence belongs to the methyltransferase superfamily. RsmH family.

The protein localises to the cytoplasm. It catalyses the reaction cytidine(1402) in 16S rRNA + S-adenosyl-L-methionine = N(4)-methylcytidine(1402) in 16S rRNA + S-adenosyl-L-homocysteine + H(+). Specifically methylates the N4 position of cytidine in position 1402 (C1402) of 16S rRNA. This Xanthomonas oryzae pv. oryzae (strain KACC10331 / KXO85) protein is Ribosomal RNA small subunit methyltransferase H.